Here is a 251-residue protein sequence, read N- to C-terminus: MILYEYPFNERIRTLLRLEDLFERFTFFVAQEDAREHHVALTTLFEISEVAGRADLKSDLMKELERQRQTLAPFRGNPGIEQNALEAVLGEIEQTLANLAQMQGKTGQHLIDNEWLASIRSRAVIPGGTCKFDLPSYYAWQQWPAEQRRQDIAKWSMPLLPLRDAAMIVLRLARESGQASKVMAMQGSYQQMLSGRTYQLMQVRVPPELRVIPEASANKYMLWVRFTAQDGDVRPRAVDIDVPFQLTLCNL.

Belongs to the ZapD family. Interacts with FtsZ.

The protein resides in the cytoplasm. In terms of biological role, cell division factor that enhances FtsZ-ring assembly. Directly interacts with FtsZ and promotes bundling of FtsZ protofilaments, with a reduction in FtsZ GTPase activity. The protein is Cell division protein ZapD of Burkholderia thailandensis (strain ATCC 700388 / DSM 13276 / CCUG 48851 / CIP 106301 / E264).